Consider the following 825-residue polypeptide: Zygotic DNA replication licensing factor mcm6-B (825 aa).

The C4-type zinc-finger motif lies at 159-186 (CLDCQTLVRDVEQQFKYTQPSICRNPVC). An MCM domain is found at 347–554 (LYHNLCTSLF…TDYAIARRIV (208 aa)). 397 to 404 (GDPSTAKS) contacts ATP. Residues 529 to 532 (SRFD) carry the Arginine finger motif. Residues 668 to 679 (DQEDEHEVEEPQ) show a composition bias toward acidic residues. A disordered region spans residues 668 to 690 (DQEDEHEVEEPQEGINGDADVPN).

Belongs to the MCM family. Component of the mcm2-7 complex (RLF-M). The complex forms a toroidal hexameric ring with the proposed subunit order mcm2-mcm6-mcm4-mcm7-mcm3-mcm5 (By simililarity). Begins to associate with zmcm3, mcm4 and mcm7 into mcm complexes at the neurula stage.

The protein resides in the nucleus. It catalyses the reaction ATP + H2O = ADP + phosphate + H(+). Acts as a component of the mcm2-7 complex (mcm complex) which is the putative replicative helicase essential for 'once per cell cycle' DNA replication initiation and elongation in eukaryotic cells. The active ATPase sites in the mcm2-7 ring are formed through the interaction surfaces of two neighboring subunits such that a critical structure of a conserved arginine finger motif is provided in trans relative to the ATP-binding site of the Walker A box of the adjacent subunit. The six ATPase active sites, however, are likely to contribute differentially to the complex helicase activity. The existence of maternal and zygotic forms of mcm3 and mcm6 suggests that specific forms of mcm2-7 complexes may be used during different stages of development. May replace mmcm6 in the mcm2-7 complex. This Xenopus laevis (African clawed frog) protein is Zygotic DNA replication licensing factor mcm6-B (zmcm6-b).